The sequence spans 318 residues: 4-hydroxy-3-methylbut-2-enyl diphosphate reductase (318 aa).

Residue Cys-12 coordinates [4Fe-4S] cluster. His-41 and His-74 together coordinate (2E)-4-hydroxy-3-methylbut-2-enyl diphosphate. Dimethylallyl diphosphate-binding residues include His-41 and His-74. Residues His-41 and His-74 each coordinate isopentenyl diphosphate. Residue Cys-96 participates in [4Fe-4S] cluster binding. (2E)-4-hydroxy-3-methylbut-2-enyl diphosphate is bound at residue His-124. A dimethylallyl diphosphate-binding site is contributed by His-124. Residue His-124 coordinates isopentenyl diphosphate. Residue Glu-126 is the Proton donor of the active site. Thr-168 contacts (2E)-4-hydroxy-3-methylbut-2-enyl diphosphate. Position 198 (Cys-198) interacts with [4Fe-4S] cluster. (2E)-4-hydroxy-3-methylbut-2-enyl diphosphate is bound by residues Ser-226, Ser-227, Asn-228, and Ser-270. Residues Ser-226, Ser-227, Asn-228, and Ser-270 each coordinate dimethylallyl diphosphate. Ser-226, Ser-227, Asn-228, and Ser-270 together coordinate isopentenyl diphosphate.

It belongs to the IspH family. [4Fe-4S] cluster serves as cofactor.

It catalyses the reaction isopentenyl diphosphate + 2 oxidized [2Fe-2S]-[ferredoxin] + H2O = (2E)-4-hydroxy-3-methylbut-2-enyl diphosphate + 2 reduced [2Fe-2S]-[ferredoxin] + 2 H(+). It carries out the reaction dimethylallyl diphosphate + 2 oxidized [2Fe-2S]-[ferredoxin] + H2O = (2E)-4-hydroxy-3-methylbut-2-enyl diphosphate + 2 reduced [2Fe-2S]-[ferredoxin] + 2 H(+). It functions in the pathway isoprenoid biosynthesis; dimethylallyl diphosphate biosynthesis; dimethylallyl diphosphate from (2E)-4-hydroxy-3-methylbutenyl diphosphate: step 1/1. Its pathway is isoprenoid biosynthesis; isopentenyl diphosphate biosynthesis via DXP pathway; isopentenyl diphosphate from 1-deoxy-D-xylulose 5-phosphate: step 6/6. In terms of biological role, catalyzes the conversion of 1-hydroxy-2-methyl-2-(E)-butenyl 4-diphosphate (HMBPP) into a mixture of isopentenyl diphosphate (IPP) and dimethylallyl diphosphate (DMAPP). Acts in the terminal step of the DOXP/MEP pathway for isoprenoid precursor biosynthesis. In Psychrobacter sp. (strain PRwf-1), this protein is 4-hydroxy-3-methylbut-2-enyl diphosphate reductase.